The sequence spans 539 residues: Chloride channel CLIC-like protein 1 (539 aa).

The N-terminal stretch at 1-18 is a signal peptide; it reads MLCRLLLCECLLLITGYA. The Lumenal portion of the chain corresponds to 19–184; that stretch reads HDDDWIDPTD…EDYFGVDPYN (166 aa). The segment at 41 to 61 is disordered; the sequence is KSQVRSGTSEKKEVSPDSSEA. A helical transmembrane segment spans residues 185–205; the sequence is VFMVLLCLLCLVVLVATELWT. Over 206-215 the chain is Cytoplasmic; that stretch reads YVRWYTQMKR. Residues 216–236 form a helical membrane-spanning segment; the sequence is IFIISFLLSLAWNWIYLYKMA. The Lumenal portion of the chain corresponds to 237–329; it reads FAQHQANIAG…GEFIKALMKE (93 aa). The helical transmembrane segment at 330–350 threads the bilayer; that stretch reads IPVLLQIPVLAILALAVLSFC. Residues 351–539 are Cytoplasmic-facing; that stretch reads YGAGRSVPML…GTEPVSSPCG (189 aa). A disordered region spans residues 361-410; it reads RHFGGPDREPPRALEPDDRRRQKGLDYRLHGGAGDADFSYRGPAGSIEQG. Over residues 364–389 the composition is skewed to basic and acidic residues; that stretch reads GGPDREPPRALEPDDRRRQKGLDYRL. Phosphoserine occurs at positions 429, 433, and 459. Residues 444–539 form a disordered region; it reads DTEAQEHPEV…GTEPVSSPCG (96 aa). A compositionally biased stretch (polar residues) spans 475–485; that stretch reads STPTEYSQSAK. Residue Thr-476 is modified to Phosphothreonine. Phosphoserine is present on residues Ser-498, Ser-513, and Ser-521. Residues 512 to 521 show a composition bias toward low complexity; sequence CSPPGGCPPS.

It belongs to the chloride channel MCLC family. Homomultimers. Interacts with mitochondrial protein PIGBOS1 (via C-terminus); the interaction occurs at the mitochondria-associated endoplasmic reticulum (ER) membrane, a zone of contact between the ER and mitochondrial membranes, but does not appear to play a role in ER-mitochondria tethering and is not affected by ER stress. Interacts with CALR. In terms of tissue distribution, expressed in cerebellum (at protein level).

Its subcellular location is the endoplasmic reticulum membrane. The enzyme catalyses chloride(in) = chloride(out). The catalysed reaction is bromide(in) = bromide(out). It carries out the reaction nitrate(in) = nitrate(out). It catalyses the reaction fluoride(in) = fluoride(out). With respect to regulation, activated by membrane phosphatidylinositol 4,5-bisphosphate (PI(4,5)P2, PIP2). Inhibited by lumenal Ca(2+). Its function is as follows. Anion-selective channel with Ca(2+)-dependent and voltage-independent gating. Permeable to small monovalent anions with selectivity for bromide &gt; chloride &gt; nitrate &gt; fluoride. Operates in the endoplasmic reticulum (ER) membrane where it mediates chloride efflux to compensate for the loss of positive charges from the ER lumen upon Ca(2+) release. Contributes to the maintenance of ER Ca(2+) pools and activation of unfolded protein response to prevent accumulation of misfolded proteins in the ER lumen. Particularly involved in ER homeostasis mechanisms underlying motor neurons and retinal photoreceptors survival. The chain is Chloride channel CLIC-like protein 1 from Mus musculus (Mouse).